The primary structure comprises 292 residues: Aquaporin PIP1-3/PIP1-4 (292 aa).

Residues 1 to 42 (MEGKEEDVRLGANKFSERQPIGTAAQGAGAGDDDKDYKEPPP) form a disordered region. Transmembrane regions (helical) follow at residues 61 to 81 (IAEF…VMGV) and 96 to 118 (IAWS…SGGH). Positions 120-122 (NPA) match the NPA 1 motif. 3 helical membrane-spanning segments follow: residues 139-159 (IFYI…VKGF), 181-201 (GDGL…VFSA), and 215-235 (ILAP…TIPI). The short motif at 241–243 (NPA) is the NPA 2 element. Residues 263–283 (IFWVGPFIGAALAAIYHQVII) traverse the membrane as a helical segment.

It belongs to the MIP/aquaporin (TC 1.A.8) family. PIP (TC 1.A.8.11) subfamily.

It localises to the cell membrane. Functionally, aquaporins facilitate the transport of water and small neutral solutes across cell membranes. This chain is Aquaporin PIP1-3/PIP1-4 (PIP1-3), found in Zea mays (Maize).